Here is a 46-residue protein sequence, read N- to C-terminus: Protein PsbN (46 aa).

A helical membrane pass occupies residues 10-30 (VAIAVLAALLGLTGFGVYTAF).

The protein belongs to the PsbN family.

The protein localises to the cellular thylakoid membrane. Its function is as follows. May play a role in photosystem I and II biogenesis. In Synechococcus sp. (strain WH7803), this protein is Protein PsbN.